The primary structure comprises 1189 residues: Pesticidal crystal protein Cry1Ca (1189 aa).

Belongs to the delta endotoxin family.

Its function is as follows. Promotes colloidosmotic lysis by binding to the midgut epithelial cells of many lepidopteran larvae including Spodoptera species. This chain is Pesticidal crystal protein Cry1Ca (cry1Ca), found in Bacillus thuringiensis subsp. aizawai.